Here is a 273-residue protein sequence, read N- to C-terminus: SAGA-associated factor 29 homolog B (273 aa).

One can recognise an SGF29 C-terminal domain in the interval 128–273; sequence EAYASLKGEQ…VVALPEGHRQ (146 aa). Histone H3K4me3 N-terminus binding stretches follow at residues 171–173 and 220–223; these read DEE and GTTA. The histone H3K4me3 binding stretch occupies residues 245 to 248; sequence FDDD.

It belongs to the SGF29 family. In terms of tissue distribution, expressed in roots, rosette leaves, cauline leaves, stems and flowers.

The protein localises to the nucleus. Chromatin reader component of the transcription regulatory histone acetylation (HAT) complex SAGA. This is SAGA-associated factor 29 homolog B from Arabidopsis thaliana (Mouse-ear cress).